The chain runs to 603 residues: MAHAQELTPEALAGLRERYRRERERRVRPDGTRQYLGADAEFGFYAADPWAGESDVREPVRDRVDVAVVGGGFGGVLAGARLRQQGVARVRVVEKGGDFGGTWYWNRYPGIHCDIEAHVYLPMLDETGYVPEWKYAPGEEIRRHAMRIAETFDLYTDVLFSTAVTSLSWDDTTGEWIVETDRHDAFRATYVITATGVLSELKLPGIPGIERFKGHTFHTSRWDYAYTGGGPDGGLTGLADKRVGVVGTGATGVQVIPKLAEDAGQLHVFQRTPSSVDVRANRRTTARDVGADRAGWASERRDNFLRVVSGEAVEEDLVADRWTATAGLLEKLLPSFRRPDDLAAFEAAYEVADAARMNDIRARVDDLVTDPATADRLKPWYRYACKRPTFSDLYLQAFNRDNVTLVDTADTHGIERMNERGVVVGDTEYPLDCLVFATGFSVGVSGVHSGRLPVRGRGGVRLRDAWSARGPRTLHGLTSNGFPNLIQLGGVQSASSVNHTHVLDEHAVHGAALVAAAEAKGAVVEPTREAEDAWIATLAEHAPDHAWFHAECTPGYYNAEGRGRPNGPTAYPHGAAAFHELLRRWREESMDELLAPRARVRAC.

FAD contacts are provided by residues Glu-94, 102-105 (TWYW), Asp-114, Tyr-120, and Val-164. 112–114 (HCD) is an NADP(+) binding site. NADP(+) is bound by residues 248–254 (TGATGVQ), 271–272 (RT), and 386–387 (KR).

Belongs to the FAD-binding monooxygenase family. It depends on FAD as a cofactor.

Catalyzes a Baeyer-Villiger oxidation reaction, i.e. the insertion of an oxygen atom into a carbon-carbon bond adjacent to a carbonyl, which converts ketones to esters or lactones using NADPH and/or NADH as an electron donor. Thus, can convert bicyclo[3.2.0]hept-2-en-6-one into the oxidative lactone products 2-oxabicyclo[3.3.0]oct-6-en-3-one and 3-oxabicyclo[3.3.0]oct-6-en-2-one. Is also able to catalyze the sulfoxidation of methyl phenyl sulfide (thioanisole). The protein is Baeyer-Villiger monooxygenase of Streptomyces coelicolor (strain ATCC BAA-471 / A3(2) / M145).